Here is a 447-residue protein sequence, read N- to C-terminus: Phosphatidylinositol N-acetylglucosaminyltransferase subunit A (447 aa).

The Cytoplasmic segment spans residues 1-387; that stretch reads MAEPPKLRVL…NRSLLERLMR (387 aa). A helical membrane pass occupies residues 388 to 408; that stretch reads FLSCGAWAGKLFCMVMILDYL. Residues 409–447 lie on the Lumenal side of the membrane; it reads LWRLLQLLQPDEDIEEAPDICLCHHRGVEVSEGLRKKIK.

It belongs to the glycosyltransferase group 1 family. Glycosyltransferase 4 subfamily. Expressed in roots, stems, leaves, flowers and pollen grains.

The protein localises to the endoplasmic reticulum membrane. The enzyme catalyses a 1,2-diacyl-sn-glycero-3-phospho-(1D-myo-inositol) + UDP-N-acetyl-alpha-D-glucosamine = a 6-(N-acetyl-alpha-D-glucosaminyl)-1-(1,2-diacyl-sn-glycero-3-phospho)-1D-myo-inositol + UDP + H(+). It functions in the pathway glycolipid biosynthesis; glycosylphosphatidylinositol-anchor biosynthesis. Its function is as follows. Necessary for the synthesis of N-acetylglucosaminyl-phosphatidylinositol, the very early intermediate in GPI-anchor biosynthesis. Required for pollen germination and pollen tube growth. In Arabidopsis thaliana (Mouse-ear cress), this protein is Phosphatidylinositol N-acetylglucosaminyltransferase subunit A.